Reading from the N-terminus, the 916-residue chain is Pertactin autotransporter (916 aa).

Residues 1–37 (MNMSLSRIVKAAPLRRTTLAMALGALGALGAAPAAHA) form the signal peptide. Positions 263-265 (RGD) match the Cell attachment site; involved in adhesion to various eukaryotic cell lines motif. 3 consecutive repeat copies span residues 269-273 (GGAVP), 274-278 (GGAVP), and 279-283 (GGAVP). Positions 269 to 288 (GGAVPGGAVPGGAVPGGFGP) are 4 X 5 AA tandem repeats of G-G-A-V-P. The 4; approximate repeat unit spans residues 284–288 (GGFGP). Residues 564-613 (SLVGAKAPPAPKPAPQPGPQPGPQPPQPPQPPQRQPEAPAPQPPAGRELS) form a disordered region. The span at 571-607 (PPAPKPAPQPGPQPGPQPPQPPQPPQRQPEAPAPQPP) shows a compositional bias: pro residues. Residues 578 to 606 (PQPGPQPGPQPPQPPQPPQRQPEAPAPQP) are 6 X 3 AA repeats of P-Q-P. The Autotransporter domain maps to 648–916 (LNPDAGGAWG…TFHAGYRYSW (269 aa)). A Cell attachment site motif is present at residues 706 to 708 (RGD).

As to quaternary structure, monomer.

The protein resides in the periplasm. It is found in the secreted. The protein localises to the cell surface. Its subcellular location is the cell outer membrane. Functionally, agglutinogen that binds to eukaryotic cells; a process mediated by the R-G-D sequence. Pertactin may have a role in bacterial adhesion, and thus play a role in virulence. May contribute to the disease state of whooping cough. This is Pertactin autotransporter (prn) from Bordetella bronchiseptica (strain ATCC BAA-588 / NCTC 13252 / RB50) (Alcaligenes bronchisepticus).